The primary structure comprises 391 residues: Formate-dependent phosphoribosylglycinamide formyltransferase (391 aa).

N(1)-(5-phospho-beta-D-ribosyl)glycinamide-binding positions include 18-19 (EL) and E78. Residues R110, K151, 156-161 (SSGKGQ), 191-194 (EEFI), and E199 each bind ATP. Positions 115–305 (DLAAQQLGLR…EFELHLRAVL (191 aa)) constitute an ATP-grasp domain. Mg(2+) contacts are provided by E264 and E276. Residues D283, K353, and 360–361 (RR) contribute to the N(1)-(5-phospho-beta-D-ribosyl)glycinamide site.

It belongs to the PurK/PurT family. Homodimer.

The enzyme catalyses N(1)-(5-phospho-beta-D-ribosyl)glycinamide + formate + ATP = N(2)-formyl-N(1)-(5-phospho-beta-D-ribosyl)glycinamide + ADP + phosphate + H(+). It functions in the pathway purine metabolism; IMP biosynthesis via de novo pathway; N(2)-formyl-N(1)-(5-phospho-D-ribosyl)glycinamide from N(1)-(5-phospho-D-ribosyl)glycinamide (formate route): step 1/1. In terms of biological role, involved in the de novo purine biosynthesis. Catalyzes the transfer of formate to 5-phospho-ribosyl-glycinamide (GAR), producing 5-phospho-ribosyl-N-formylglycinamide (FGAR). Formate is provided by PurU via hydrolysis of 10-formyl-tetrahydrofolate. This is Formate-dependent phosphoribosylglycinamide formyltransferase from Synechococcus elongatus (strain ATCC 33912 / PCC 7942 / FACHB-805) (Anacystis nidulans R2).